A 317-amino-acid chain; its full sequence is Acetyl-coenzyme A carboxylase carboxyl transferase subunit alpha (317 aa).

Residues 40–293 enclose the CoA carboxyltransferase C-terminal domain; sequence LEVRVREAIV…GDVIANALGE (254 aa).

It belongs to the AccA family. As to quaternary structure, acetyl-CoA carboxylase is a heterohexamer composed of biotin carboxyl carrier protein (AccB), biotin carboxylase (AccC) and two subunits each of ACCase subunit alpha (AccA) and ACCase subunit beta (AccD).

The protein resides in the cytoplasm. It carries out the reaction N(6)-carboxybiotinyl-L-lysyl-[protein] + acetyl-CoA = N(6)-biotinyl-L-lysyl-[protein] + malonyl-CoA. It participates in lipid metabolism; malonyl-CoA biosynthesis; malonyl-CoA from acetyl-CoA: step 1/1. In terms of biological role, component of the acetyl coenzyme A carboxylase (ACC) complex. First, biotin carboxylase catalyzes the carboxylation of biotin on its carrier protein (BCCP) and then the CO(2) group is transferred by the carboxyltransferase to acetyl-CoA to form malonyl-CoA. This chain is Acetyl-coenzyme A carboxylase carboxyl transferase subunit alpha, found in Rhizobium etli (strain ATCC 51251 / DSM 11541 / JCM 21823 / NBRC 15573 / CFN 42).